Consider the following 386-residue polypeptide: Chaperone protein DnaJ (386 aa).

The 66-residue stretch at 5 to 70 (DYYEVLGVER…QKRAAYDRYG (66 aa)) folds into the J domain. The CR-type zinc-finger motif lies at 138 to 216 (GKDETIHVPQ…CGGHGQVKEE (79 aa)). Zn(2+)-binding residues include C151, C154, C168, C171, C190, C193, C204, and C207. 4 CXXCXGXG motif repeats span residues 151–158 (CRPCEGTG), 168–175 (CETCGGHG), 190–197 (CHICQGRG), and 204–211 (CKTCGGHG).

This sequence belongs to the DnaJ family. In terms of assembly, homodimer. Zn(2+) serves as cofactor.

It localises to the cytoplasm. Its function is as follows. Participates actively in the response to hyperosmotic and heat shock by preventing the aggregation of stress-denatured proteins and by disaggregating proteins, also in an autonomous, DnaK-independent fashion. Unfolded proteins bind initially to DnaJ; upon interaction with the DnaJ-bound protein, DnaK hydrolyzes its bound ATP, resulting in the formation of a stable complex. GrpE releases ADP from DnaK; ATP binding to DnaK triggers the release of the substrate protein, thus completing the reaction cycle. Several rounds of ATP-dependent interactions between DnaJ, DnaK and GrpE are required for fully efficient folding. Also involved, together with DnaK and GrpE, in the DNA replication of plasmids through activation of initiation proteins. The polypeptide is Chaperone protein DnaJ (Hyphomonas neptunium (strain ATCC 15444)).